Reading from the N-terminus, the 148-residue chain is Snaclec alboaggregin-D subunit beta (148 aa).

Residues 1 to 23 (MGRFISVSFGLLVVFLSLSGAGA) form the signal peptide. A disulfide bridge links Cys27 with Cys38. One can recognise a C-type lectin domain in the interval 34 to 145 (YDLYCYKVFK…CNSTYSFVCK (112 aa)). A glycan (N-linked (GlcNAc...) asparagine) is linked at Asn47. Cystine bridges form between Cys55/Cys144 and Cys121/Cys136. N-linked (GlcNAc...) asparagine glycosylation occurs at Asn137.

Tetramer of heterodimers of alpha and beta subunits (alphabeta)(4); disulfide-linked. In terms of tissue distribution, expressed by the venom gland.

The protein resides in the secreted. In terms of biological role, snaclec that induces human platelet aggregation in the absence of any cofactor with the EC(50) of 0.25 nM and causes tyrosine phosphorylation in human platelets. Antibodies against either platelet GPIbalpha (GP1BA) or GPVI (GP6) inhibit alboaggregin D-induced platelet aggregation. Only the combination of these two antibodies completely inhibit aggregation, suggesting that it acts through both GPIbalpha (GP1BA) and GPVI (GP6). This is Snaclec alboaggregin-D subunit beta from Trimeresurus albolabris (White-lipped pit viper).